We begin with the raw amino-acid sequence, 179 residues long: MDKHGIIESLLYTAGDEGLDEKQLLEILEINQAKLSELISSYTSSGLIIQKFGSTYILTSKKEASPYIEQLIEQKSNMKLSQAAMETLSIIAYNQPLSRSDIELIRGINSDGAVRTLIARGLIEAKDVENSRSHALQTTDLFLNVFGIEKIEDLPTTEEDEEEMDDFFSNLVNQKGDTK.

It belongs to the ScpB family. Homodimer. Homodimerization may be required to stabilize the binding of ScpA to the Smc head domains. Component of a cohesin-like complex composed of ScpA, ScpB and the Smc homodimer, in which ScpA and ScpB bind to the head domain of Smc. The presence of the three proteins is required for the association of the complex with DNA.

Its subcellular location is the cytoplasm. In terms of biological role, participates in chromosomal partition during cell division. May act via the formation of a condensin-like complex containing Smc and ScpA that pull DNA away from mid-cell into both cell halves. This chain is Segregation and condensation protein B, found in Staphylococcus haemolyticus (strain JCSC1435).